The chain runs to 430 residues: Glutamyl-tRNA reductase 1 (430 aa).

Substrate-binding positions include 49 to 52 (TCNR), S109, 114 to 116 (EGQ), and Q120. The Nucleophile role is filled by C50. 189–194 (GAGSMA) serves as a coordination point for NADP(+).

Belongs to the glutamyl-tRNA reductase family. As to quaternary structure, homodimer.

The catalysed reaction is (S)-4-amino-5-oxopentanoate + tRNA(Glu) + NADP(+) = L-glutamyl-tRNA(Glu) + NADPH + H(+). It participates in porphyrin-containing compound metabolism; protoporphyrin-IX biosynthesis; 5-aminolevulinate from L-glutamyl-tRNA(Glu): step 1/2. Catalyzes the NADPH-dependent reduction of glutamyl-tRNA(Glu) to glutamate 1-semialdehyde (GSA). The protein is Glutamyl-tRNA reductase 1 of Nocardioides sp. (strain ATCC BAA-499 / JS614).